A 307-amino-acid polypeptide reads, in one-letter code: Oxygen-dependent coproporphyrinogen-III oxidase (307 aa).

S97 is a binding site for substrate. The a divalent metal cation site is built by H101 and H111. The Proton donor role is filled by H111. 113 to 115 (NVR) contributes to the substrate binding site. H152 and H182 together coordinate a divalent metal cation. The interval 247 to 282 (YVEFNLVWDRGTHFGLQSGGRTESILMSMPPLASWS) is important for dimerization. A substrate-binding site is contributed by 265–267 (GGR).

Belongs to the aerobic coproporphyrinogen-III oxidase family. In terms of assembly, homodimer. The cofactor is a divalent metal cation.

It is found in the cytoplasm. It carries out the reaction coproporphyrinogen III + O2 + 2 H(+) = protoporphyrinogen IX + 2 CO2 + 2 H2O. It participates in porphyrin-containing compound metabolism; protoporphyrin-IX biosynthesis; protoporphyrinogen-IX from coproporphyrinogen-III (O2 route): step 1/1. Involved in the heme biosynthesis. Catalyzes the aerobic oxidative decarboxylation of propionate groups of rings A and B of coproporphyrinogen-III to yield the vinyl groups in protoporphyrinogen-IX. This chain is Oxygen-dependent coproporphyrinogen-III oxidase, found in Polaromonas naphthalenivorans (strain CJ2).